We begin with the raw amino-acid sequence, 311 residues long: Probable flavin reductase (311 aa).

Residues 38–41 (TANS), 55–61 (CLAKSSR), 88–89 (FA), and R95 contribute to the FMN site.

The protein belongs to the non-flavoprotein flavin reductase family.

The polypeptide is Probable flavin reductase (Rhizobium meliloti (strain 1021) (Ensifer meliloti)).